The following is a 754-amino-acid chain: Probable beta-glucosidase D (754 aa).

The first 20 residues, 1 to 20, serve as a signal peptide directing secretion; it reads MKVLSFIVAAALLGLTGASS. N-linked (GlcNAc...) asparagine glycosylation is found at Asn-66, Asn-69, and Asn-186. Positions 186-206 are disordered; sequence NRTGGGGGGGGDSGSAPYSSN. Gly residues predominate over residues 188-198; the sequence is TGGGGGGGGDS. An N-linked (GlcNAc...) asparagine glycan is attached at Asn-239. Asp-267 is an active-site residue. 9 N-linked (GlcNAc...) asparagine glycosylation sites follow: Asn-301, Asn-345, Asn-443, Asn-512, Asn-534, Asn-573, Asn-588, Asn-655, and Asn-745.

This sequence belongs to the glycosyl hydrolase 3 family.

Its subcellular location is the secreted. The catalysed reaction is Hydrolysis of terminal, non-reducing beta-D-glucosyl residues with release of beta-D-glucose.. It functions in the pathway glycan metabolism; cellulose degradation. In terms of biological role, beta-glucosidases are one of a number of cellulolytic enzymes involved in the degradation of cellulosic biomass. Catalyzes the last step releasing glucose from the inhibitory cellobiose. The protein is Probable beta-glucosidase D (bglD) of Aspergillus niger (strain ATCC MYA-4892 / CBS 513.88 / FGSC A1513).